Here is a 917-residue protein sequence, read N- to C-terminus: ABC transporter A family member 12 (917 aa).

A run of 6 helical transmembrane segments spans residues 34-54 (LILVPLFLCLILLAIQQVLDA), 323-343 (IASLLGPLFFTWVVLLLFPVI), 377-397 (FLTISMLYVISLVGFGSAIGL), 409-429 (FVFYFIYSNLQISLAFLVSSI), 435-455 (TVTVIAYILVYGTGLLGSFLF), and 508-528 (GEVFCIMSVEWFLALIVAYYI). An ABC transporter domain is found at 595–832 (ILCDNLKKVY…YGGSYVFTMT (238 aa)). Residue 633-640 (GPNGAGKT) coordinates ATP.

This sequence belongs to the ABC transporter superfamily. ABCA family. CPR flippase (TC 3.A.1.211) subfamily.

It is found in the membrane. In Arabidopsis thaliana (Mouse-ear cress), this protein is ABC transporter A family member 12 (ABCA12).